The primary structure comprises 211 residues: uncharacterized protein (211 aa).

Helical transmembrane passes span 77–97 (FLMF…AITI), 113–133 (GISV…VLIG), 152–172 (ILIS…NVIP), and 179–199 (LLTP…PLFG).

The protein resides in the cell membrane. This is an uncharacterized protein from Bacillus subtilis (strain 168).